The following is a 445-amino-acid chain: GRAM domain-containing protein 2B (445 aa).

N-acetylmethionine is present on methionine 1. Residues 1 to 10 are compositionally biased toward polar residues; it reads MVKKPISSSD. Positions 1–119 are disordered; sequence MVKKPISSSD…RKKSSSSSQY (119 aa). Low complexity predominate over residues 18–37; sequence PSSPKSSAGASHSSTDSPSS. Polar residues-rich tracts occupy residues 56–68 and 82–93; these read KSPT…SSVE and SKSSFDGSNLLS. The span at 94–112 shows a compositional bias: basic and acidic residues; sequence DKNDCKTESKADSKTERKK. Residues 123-190 enclose the GRAM domain; that stretch reads MHFHKLFLDV…FSVTLIKKTK (68 aa). Residues serine 238, serine 255, and serine 265 each carry the phosphoserine modification. Residues 277–331 are disordered; the sequence is DLEGYSSSGSQTPESENSRDFHVTESQTVLNVTKGETKPPRTDAHGSRAPDGKAK. The segment covering 281–291 has biased composition (polar residues); that stretch reads YSSSGSQTPES. A compositionally biased stretch (basic and acidic residues) spans 311–330; that stretch reads GETKPPRTDAHGSRAPDGKA.

This is GRAM domain-containing protein 2B (Gramd2b) from Rattus norvegicus (Rat).